The chain runs to 158 residues: Low molecular weight phosphotyrosine protein phosphatase (158 aa).

The residue at position 2 (Ala2) is an N-acetylalanine. Residue Cys13 is the Nucleophile of the active site. Residue Arg19 is part of the active site. The Proton donor role is filled by Asp130. A phosphotyrosine mark is found at Tyr132 and Tyr133.

This sequence belongs to the low molecular weight phosphotyrosine protein phosphatase family. Interacts with EPHA2; dephosphorylates EPHA2. Interacts with EPHB1. In terms of assembly, interacts with the SH3 domain of SPTAN1. There is no interaction observed for isoforms 2 or 3. Post-translationally, phosphorylated by LCK. Phosphorylation at Tyr-132 increases its phosphatase activity. Not phosphorylated. In terms of tissue distribution, expressed in T-lymphocytes.

It is found in the cytoplasm. The enzyme catalyses O-phospho-L-tyrosyl-[protein] + H2O = L-tyrosyl-[protein] + phosphate. It catalyses the reaction a phosphate monoester + H2O = an alcohol + phosphate. With respect to regulation, inhibited by sulfhydryl reagents. Acts on tyrosine phosphorylated proteins, low-MW aryl phosphates and natural and synthetic acyl phosphates with differences in substrate specificity between isoform 1 and isoform 2. Functionally, does not possess phosphatase activity. The sequence is that of Low molecular weight phosphotyrosine protein phosphatase from Homo sapiens (Human).